A 374-amino-acid polypeptide reads, in one-letter code: N-acetyldiaminopimelate deacetylase (374 aa).

The active site involves aspartate 68. Glutamate 127 functions as the Proton acceptor in the catalytic mechanism.

Belongs to the peptidase M20A family. N-acetyldiaminopimelate deacetylase subfamily.

It carries out the reaction N-acetyl-(2S,6S)-2,6-diaminopimelate + H2O = (2S,6S)-2,6-diaminopimelate + acetate. Its pathway is amino-acid biosynthesis; L-lysine biosynthesis via DAP pathway; LL-2,6-diaminopimelate from (S)-tetrahydrodipicolinate (acetylase route): step 3/3. Catalyzes the conversion of N-acetyl-diaminopimelate to diaminopimelate and acetate. The chain is N-acetyldiaminopimelate deacetylase from Shouchella clausii (strain KSM-K16) (Alkalihalobacillus clausii).